Reading from the N-terminus, the 104-residue chain is Type IV secretion system protein PtlB homolog (104 aa).

Residues 30 to 50 (IALLGIWFSIAFLALFPVALL) form a helical membrane-spanning segment.

This sequence belongs to the virB3 family.

It localises to the cell membrane. The chain is Type IV secretion system protein PtlB homolog (ptlB) from Bordetella bronchiseptica (strain ATCC BAA-588 / NCTC 13252 / RB50) (Alcaligenes bronchisepticus).